Reading from the N-terminus, the 427-residue chain is UDP-N-acetylglucosamine 1-carboxyvinyltransferase 1 (427 aa).

Residue K24 to N25 coordinates phosphoenolpyruvate. R97 lines the UDP-N-acetyl-alpha-D-glucosamine pocket. The active-site Proton donor is C121. 2-(S-cysteinyl)pyruvic acid O-phosphothioketal is present on C121. UDP-N-acetyl-alpha-D-glucosamine-binding positions include R126–L130, D309, and V331.

This sequence belongs to the EPSP synthase family. MurA subfamily.

The protein resides in the cytoplasm. The catalysed reaction is phosphoenolpyruvate + UDP-N-acetyl-alpha-D-glucosamine = UDP-N-acetyl-3-O-(1-carboxyvinyl)-alpha-D-glucosamine + phosphate. It participates in cell wall biogenesis; peptidoglycan biosynthesis. Its function is as follows. Cell wall formation. Adds enolpyruvyl to UDP-N-acetylglucosamine. This Lactococcus lactis subsp. lactis (strain IL1403) (Streptococcus lactis) protein is UDP-N-acetylglucosamine 1-carboxyvinyltransferase 1.